We begin with the raw amino-acid sequence, 1365 residues long: Glucosyltransferase-S (1365 aa).

The or 37 signal peptide spans 1–36 (MEKNLRYKLHKVKKQWVAIGVTTVTLSFLAGGQVVA). Composition is skewed to polar residues over residues 80–89 (DQTATSQVSP) and 127–146 (RQSAADTSTDGKAVPQTSDQ). Disordered regions lie at residues 80–99 (DQTATSQVSPATDGRVDNQV) and 127–152 (RQSAADTSTDGKAVPQTSDQPGHLET). Cell wall-binding repeat units follow at residues 146-166 (QPGHLETVDGKTYYVDANGQR) and 168-187 (KNYSMVIDGKTYYFDGQTGE). A catalytic; approximate region spans residues 200-1000 (QDNVPDSYQA…KPIDPSVKIT (801 aa)). Cell wall-binding repeat units lie at residues 1052–1071 (ANGFISKNGGIHYLDKNGQE), 1073–1092 (KNRFKEISGSWYYFDSDGKM), 1093–1112 (ATGKTKIGNDTYLFMPNGKQ), 1113–1133 (LKEGVWYDGKKAYYYDDNGRT), 1136–1159 (NKGFVEFRVDGQDKWRYFNGDGTI), 1160–1179 (AIGLVSLDNRTLYFDAYGYQ), 1234–1253 (LTGEQTIDGQKVFFQDNGVQ), 1278–1298 (GKGWYSTSDDNWVYVNESGQV), 1299–1318 (LTGLQTIDGQTVYFDDKGIQ), and 1343–1362 (RDRWKNVDGNWYYFNRNGLA).

This sequence belongs to the glycosyl hydrolase 70 family.

It carries out the reaction [(1-&gt;6)-alpha-D-glucosyl](n) + sucrose = [(1-&gt;6)-alpha-D-glucosyl](n+1) + D-fructose. With respect to regulation, glucan synthesis by GTF-S is independent of primer glucan unlike GTF-I. In terms of biological role, production of extracellular glucans, that are thought to play a key role in the development of the dental plaque because of their ability to adhere to smooth surfaces and mediate the aggregation of bacterial cells and food debris. The protein is Glucosyltransferase-S (gtfS) of Streptococcus downei (Streptococcus sobrinus).